A 212-amino-acid chain; its full sequence is Pyridoxine/pyridoxamine 5'-phosphate oxidase (212 aa).

Substrate is bound by residues 7–10 (RRQY) and lysine 65. FMN contacts are provided by residues 60 to 65 (RIVLLK), 75 to 76 (FT), arginine 81, lysine 82, and glutamine 104. Tyrosine 122, arginine 126, and serine 130 together coordinate substrate. FMN-binding positions include 139-140 (QS) and tryptophan 184. Residue 190 to 192 (RLH) coordinates substrate. Arginine 194 serves as a coordination point for FMN.

The protein belongs to the pyridoxamine 5'-phosphate oxidase family. In terms of assembly, homodimer. FMN is required as a cofactor.

The catalysed reaction is pyridoxamine 5'-phosphate + O2 + H2O = pyridoxal 5'-phosphate + H2O2 + NH4(+). It catalyses the reaction pyridoxine 5'-phosphate + O2 = pyridoxal 5'-phosphate + H2O2. It functions in the pathway cofactor metabolism; pyridoxal 5'-phosphate salvage; pyridoxal 5'-phosphate from pyridoxamine 5'-phosphate: step 1/1. It participates in cofactor metabolism; pyridoxal 5'-phosphate salvage; pyridoxal 5'-phosphate from pyridoxine 5'-phosphate: step 1/1. In terms of biological role, catalyzes the oxidation of either pyridoxine 5'-phosphate (PNP) or pyridoxamine 5'-phosphate (PMP) into pyridoxal 5'-phosphate (PLP). This Alteromonas mediterranea (strain DSM 17117 / CIP 110805 / LMG 28347 / Deep ecotype) protein is Pyridoxine/pyridoxamine 5'-phosphate oxidase.